The primary structure comprises 66 residues: Large ribosomal subunit protein bL33 (66 aa).

Belongs to the bacterial ribosomal protein bL33 family.

This Synechococcus sp. (strain CC9311) protein is Large ribosomal subunit protein bL33.